The sequence spans 940 residues: Isoleucine--tRNA ligase (940 aa).

The short motif at 58–68 (PYANGSIHIGH) is the 'HIGH' region element. Glu564 lines the L-isoleucyl-5'-AMP pocket. The 'KMSKS' region signature appears at 605 to 609 (KMSKS). Lys608 contributes to the ATP binding site. Cys903, Cys906, Cys923, and Cys926 together coordinate Zn(2+).

The protein belongs to the class-I aminoacyl-tRNA synthetase family. IleS type 1 subfamily. In terms of assembly, monomer. Zn(2+) serves as cofactor.

It localises to the cytoplasm. It catalyses the reaction tRNA(Ile) + L-isoleucine + ATP = L-isoleucyl-tRNA(Ile) + AMP + diphosphate. Catalyzes the attachment of isoleucine to tRNA(Ile). As IleRS can inadvertently accommodate and process structurally similar amino acids such as valine, to avoid such errors it has two additional distinct tRNA(Ile)-dependent editing activities. One activity is designated as 'pretransfer' editing and involves the hydrolysis of activated Val-AMP. The other activity is designated 'posttransfer' editing and involves deacylation of mischarged Val-tRNA(Ile). The polypeptide is Isoleucine--tRNA ligase (Shewanella sp. (strain W3-18-1)).